The chain runs to 384 residues: Na(+)/H(+) antiporter NhaA (384 aa).

Helical transmembrane passes span 7–27 (FYNL…LAII), 58–78 (LLLW…GLEI), 94–114 (LVPA…FIFF), 124–144 (GWAI…SLLG), 153–173 (ILLT…IALF), 179–199 (SLLS…LNYF), 204–224 (ISVF…SGVH), 256–276 (VVFL…FVGL), 285–305 (VVLG…FLSL), 325–345 (VYGI…IGSL), and 357–377 (MVKI…FLVL).

The protein belongs to the NhaA Na(+)/H(+) (TC 2.A.33) antiporter family.

The protein resides in the cell inner membrane. It catalyses the reaction Na(+)(in) + 2 H(+)(out) = Na(+)(out) + 2 H(+)(in). Na(+)/H(+) antiporter that extrudes sodium in exchange for external protons. This is Na(+)/H(+) antiporter NhaA from Legionella pneumophila (strain Corby).